The following is a 401-amino-acid chain: L-methionine gamma-lyase (401 aa).

Residues 59–61 (YTR) and 89–90 (GI) each bind pyridoxal 5'-phosphate. A substrate-binding site is contributed by Tyr-114. A pyridoxal 5'-phosphate-binding site is contributed by 210–212 (SAT). Lys-213 carries the N6-(pyridoxal phosphate)lysine modification. Arg-377 contacts substrate.

It belongs to the trans-sulfuration enzymes family. L-methionine gamma-lyase subfamily. Homotetramer; dimer of active dimers. Requires pyridoxal 5'-phosphate as cofactor.

It catalyses the reaction L-methionine + H2O = methanethiol + 2-oxobutanoate + NH4(+). The catalysed reaction is L-homocysteine + H2O = 2-oxobutanoate + hydrogen sulfide + NH4(+) + H(+). Its function is as follows. Catalyzes the alpha,gamma-elimination of L-methionine to produce methanethiol, 2-oxobutanoate and ammonia; methanethiol (methyl mercaptan) is considered to be one of the main causes of the oral malodor associated with periodontitis and may also play a role in the pathogenicity of T.denticola. Also displays homocysteine desulfhydrase activity, degrading homocysteine to produce hydrogen sulfide, 2-oxobutanoate and ammonia. This Treponema denticola (strain ATCC 35405 / DSM 14222 / CIP 103919 / JCM 8153 / KCTC 15104) protein is L-methionine gamma-lyase.